Here is a 179-residue protein sequence, read N- to C-terminus: Replication restart protein DnaT (179 aa).

The interval 1 to 83 is required for trimerization and to bind PriB; sequence MSSRILTSHF…FEEPAAAPVA (83 aa). A binds ssDNA region spans residues 84–179; that stretch reads VPMGKFAMYA…DSHIPRGFRG (96 aa). The interval 151 to 179 is disordered; that stretch reads SRASNGGQPKRDVNSVSEPDSHIPRGFRG. A compositionally biased stretch (basic and acidic residues) spans 159–173; it reads PKRDVNSVSEPDSHI.

Belongs to the DnaT family. Homotrimer. Interacts with PriB. Interacts with PriC. Component of the replication restart primosome. Primosome assembly occurs via a 'hand-off' mechanism. PriA binds to replication forks, subsequently PriB then DnaT bind; DnaT then displaces ssDNA to generate the helicase loading substrate.

Involved in the restart of stalled replication forks, which reloads the replicative helicase on sites other than the origin of replication. Can function in multiple replication restart pathways. Displaces ssDNA from a PriB-ssDNA complex. Probably forms a spiral filament on ssDNA. In terms of biological role, binds single-stranded (ss)DNA. The minimal binding site is about 26 +/- 2 nucleotides (nt) per trimer. Two DNA-protein complexes are seen with 55 nt-long ssDNA. The protein is Replication restart protein DnaT of Klebsiella pneumoniae subsp. pneumoniae (strain ATCC 700721 / MGH 78578).